We begin with the raw amino-acid sequence, 201 residues long: MKCSHKLGHSLTPHSCFWWLFLLCTGLSWSFADGNGNNSTYQYIYNLTICELNGTNWLSGHFEWAVETFVLYPVVTHILSLGFLTTSHFFDALGLGAVSTAGFVGGRYVLSSVYGACAFAAFVCFVIRAAKNCMACRYARTRFTNFIVDDRGGVHRWKSPIVVEKLGKAEIGGNLVTIKHVVLEGVKAQPLTRTSAEQWEA.

Residues 1-32 form the signal peptide; that stretch reads MKCSHKLGHSLTPHSCFWWLFLLCTGLSWSFA. Residues 33–63 lie on the Virion surface side of the membrane; that stretch reads DGNGNNSTYQYIYNLTICELNGTNWLSGHFE. Residues asparagine 37, asparagine 38, asparagine 46, and asparagine 53 are each glycosylated (N-linked (GlcNAc...) asparagine; by host). 2 consecutive transmembrane segments (helical) span residues 64-84 and 109-129; these read WAVE…LGFL and VLSS…VIRA.

Belongs to the arteriviridae GP5 protein family. In terms of assembly, heterodimer with the membrane protein; disulfide-linked. This heterodimerization is required for transport to the Golgi complex. Interacts with host SIGLEC1; this interaction plays a role in virus entry into host cell. Interacts with glycoprotein 4. In terms of processing, N-glycosylated.

The protein localises to the virion membrane. Major envelope protein present in abundant amounts in the virion envelope. Mediates virion sialic acid-dependent attachment the sialoadhesin receptor SIGLEC1. This attachment induces virion internalization into alveolar macrophages predominantly through clathrin-dependent endocytosis. This Porcine reproductive and respiratory syndrome virus (isolate Pig/United States/SD 01-08/2001) (PRRSV) protein is Glycoprotein 5 (GP5).